A 716-amino-acid polypeptide reads, in one-letter code: DNA ligase (716 aa).

Residues 49–53 (DAAYD), 98–99 (SL), and Glu132 contribute to the NAD(+) site. The active-site N6-AMP-lysine intermediate is Lys134. Residues Arg155, Glu192, Lys308, and Lys332 each contribute to the NAD(+) site. Residues Cys437, Cys439, Cys461, and Cys467 each contribute to the Zn(2+) site. A BRCT domain is found at 638-716 (KRNSPIATKT…EDEWLQLIGE (79 aa)).

It belongs to the NAD-dependent DNA ligase family. LigA subfamily. The cofactor is Mg(2+). It depends on Mn(2+) as a cofactor.

It carries out the reaction NAD(+) + (deoxyribonucleotide)n-3'-hydroxyl + 5'-phospho-(deoxyribonucleotide)m = (deoxyribonucleotide)n+m + AMP + beta-nicotinamide D-nucleotide.. DNA ligase that catalyzes the formation of phosphodiester linkages between 5'-phosphoryl and 3'-hydroxyl groups in double-stranded DNA using NAD as a coenzyme and as the energy source for the reaction. It is essential for DNA replication and repair of damaged DNA. The polypeptide is DNA ligase (Bradyrhizobium sp. (strain ORS 278)).